The following is a 225-amino-acid chain: 3-dehydroquinate dehydratase (225 aa).

3-dehydroquinate-binding positions include 30–32 (EWR) and Arg62. Catalysis depends on His118, which acts as the Proton donor/acceptor. The active-site Schiff-base intermediate with substrate is the Lys143. Arg186, Ser205, and Gln209 together coordinate 3-dehydroquinate.

The protein belongs to the type-I 3-dehydroquinase family. In terms of assembly, homodimer.

The enzyme catalyses 3-dehydroquinate = 3-dehydroshikimate + H2O. Its pathway is metabolic intermediate biosynthesis; chorismate biosynthesis; chorismate from D-erythrose 4-phosphate and phosphoenolpyruvate: step 3/7. Its function is as follows. Involved in the third step of the chorismate pathway, which leads to the biosynthesis of aromatic amino acids. Catalyzes the cis-dehydration of 3-dehydroquinate (DHQ) and introduces the first double bond of the aromatic ring to yield 3-dehydroshikimate. This chain is 3-dehydroquinate dehydratase, found in Streptococcus thermophilus (strain ATCC BAA-250 / LMG 18311).